Here is a 405-residue protein sequence, read N- to C-terminus: Nuclear RNA export factor 2 (405 aa).

Positions 1-33 (MRGQNRRGYRNIEGRLSLSSHSSHSSPRQTHVT) are disordered. Residues 16 to 26 (LSLSSHSSHSS) are compositionally biased toward low complexity. The RRM domain occupies 26 to 94 (SPRQTHVTNL…SVVLQHIGYK (69 aa)). LRR repeat units follow at residues 97–118 (RISG…SSLS) and 123–144 (FLKF…KKLG). The NTF2 domain occupies 215 to 382 (LVEEFIITYY…VAIVSDQLFI (168 aa)).

Belongs to the NXF family.

The protein localises to the nucleus. Functionally, involved in the export of cellular mRNA to the cytoplasm. Plays a role in the nuclear retention of unspliced mRNAs. This Caenorhabditis elegans protein is Nuclear RNA export factor 2.